Reading from the N-terminus, the 81-residue chain is Protein Vpu (81 aa).

Residues 1-7 (MQPLVIA) lie on the Extracellular side of the membrane. A helical transmembrane segment spans residues 8 to 28 (AIVALVVAGIIAIVVWSIVFI). Residues 29–81 (EYRKIRRQRKIDKLIDRISERAEDSGNESEGDQEELSALVGMGHDAPWVINDL) are Cytoplasmic-facing. Residues Ser-53 and Ser-57 each carry the phosphoserine; by host CK2 modification.

The protein belongs to the HIV-1 VPU protein family. As to quaternary structure, homopentamer. Interacts with host CD4 and BRTC; these interactions induce proteasomal degradation of CD4. Interacts with host BST2; this interaction leads to the degradation of host BST2. Interacts with host FBXW11. Interacts with host AP1M1; this interaction plays a role in the mistrafficking and subsequent degradation of host BST2. Interacts with host RANBP2; this interaction allows Vpu to down-regulate host BLM sumoylation. Phosphorylated by host CK2. This phosphorylation is necessary for interaction with human BTRC and degradation of CD4.

Its subcellular location is the host membrane. Ion channel activity is inhibited by hexamethylene amiloride in vitro. Functionally, enhances virion budding by targeting host CD4 and Tetherin/BST2 to proteasome degradation. Degradation of CD4 prevents any unwanted premature interactions between viral Env and its host receptor CD4 in the endoplasmic reticulum. Degradation of antiretroviral protein Tetherin/BST2 is important for virion budding, as BST2 tethers new viral particles to the host cell membrane. Mechanistically, Vpu bridges either CD4 or BST2 to BTRC, a substrate recognition subunit of the Skp1/Cullin/F-box protein E3 ubiquitin ligase, induces their ubiquitination and subsequent proteasomal degradation. The alteration of the E3 ligase specificity by Vpu seems to promote the degradation of host IKBKB, leading to NF-kappa-B down-regulation and subsequent apoptosis. Acts as a viroporin that forms an oligomeric ion channel in membranes. Modulates the host DNA repair mechanisms to promote degradation of nuclear viral cDNA in cells that are already productively infected in order to suppress immune sensing and proviral hyper-integration (superinfection). Manipulates PML-NBs and modulates SUMOylation of host BLM protein thereby enhancing its DNA-end processing activity toward viral unintegrated linear DNA. Also inhibits RAD52-mediated homologous repair of viral cDNA, preventing the generation of dead-end circular forms of single copies of the long terminal repeat and permitting sustained nucleolytic attack. The polypeptide is Protein Vpu (Homo sapiens (Human)).